The primary structure comprises 379 residues: Putative 8-amino-7-oxononanoate synthase (379 aa).

A substrate-binding site is contributed by Arg18. Pyridoxal 5'-phosphate is bound at residue Gly106–Tyr107. Residue His130 coordinates substrate. Pyridoxal 5'-phosphate is bound by residues Ser178, Asp204–His207, and Thr235–Lys238. Lys238 carries the post-translational modification N6-(pyridoxal phosphate)lysine. Thr351 contributes to the substrate binding site.

It belongs to the class-II pyridoxal-phosphate-dependent aminotransferase family. BioF subfamily. As to quaternary structure, homodimer. Pyridoxal 5'-phosphate serves as cofactor.

It catalyses the reaction 6-carboxyhexanoyl-[ACP] + L-alanine + H(+) = (8S)-8-amino-7-oxononanoate + holo-[ACP] + CO2. The protein operates within cofactor biosynthesis; biotin biosynthesis. In terms of biological role, catalyzes the decarboxylative condensation of pimeloyl-[acyl-carrier protein] and L-alanine to produce 8-amino-7-oxononanoate (AON), [acyl-carrier protein], and carbon dioxide. The sequence is that of Putative 8-amino-7-oxononanoate synthase (bioF) from Haemophilus influenzae (strain 86-028NP).